The sequence spans 335 residues: Probable cytosolic iron-sulfur protein assembly protein Ciao1 (335 aa).

WD repeat units follow at residues 12–51, 57–96, 101–140, 146–185, 192–231, 250–289, and 301–335; these read GHKG…WSTK, GHKR…FECN, GHEN…EFEC, PHTQ…NDWD, SHTS…NTAG, QHSR…KPDE, and AHDQ…KVSE.

It belongs to the WD repeat CIA1 family.

Essential component of the cytosolic iron-sulfur (Fe/S) protein assembly machinery. Required for the maturation of extramitochondrial Fe/S proteins. In Drosophila simulans (Fruit fly), this protein is Probable cytosolic iron-sulfur protein assembly protein Ciao1.